A 335-amino-acid polypeptide reads, in one-letter code: Transaldolase (335 aa).

Ser-2 is subject to N-acetylserine. Lys-144 functions as the Schiff-base intermediate with substrate in the catalytic mechanism.

This sequence belongs to the transaldolase family. Type 1 subfamily. In terms of assembly, homodimer.

It catalyses the reaction D-sedoheptulose 7-phosphate + D-glyceraldehyde 3-phosphate = D-erythrose 4-phosphate + beta-D-fructose 6-phosphate. It functions in the pathway carbohydrate degradation; pentose phosphate pathway; D-glyceraldehyde 3-phosphate and beta-D-fructose 6-phosphate from D-ribose 5-phosphate and D-xylulose 5-phosphate (non-oxidative stage): step 2/3. Its function is as follows. Transaldolase is important for the balance of metabolites in the pentose-phosphate pathway. This chain is Transaldolase (TAL1), found in Saccharomyces cerevisiae (strain ATCC 204508 / S288c) (Baker's yeast).